Consider the following 395-residue polypeptide: MNFQRMTDLNLAGKRVLIREDLNVPVKNGVITSDARLRAALPTIKAALEKGAAVMVFSHLGRPVEGEPKPEQSLAPVAAYLTEALGQEVKLFTDYLNGVEVEAGQVVLLENVRFNPGEKKNNPELAQKYAALCDVFVMDAFGTAHRAEASTEGVARFAPVAAAGPLLAAELDALGRAMQTPEKPMVAIVAGSKVSTKLDVLNSLSGICDQLIVGGGIANTFLAAAGYNVGKSLYEADLVETAKQIAAKVSVPLPTDVVVADASQINFEDFLGSLAAAQAVIKKVEDVTANDMILDVGPETAKAFANILTTSKTILWNGPVGVFEVDQFGEGTKALSLAVAQSDAFSIAGGGDTLAAIDKYNVADQIGYISTGGGAFLEFVEGKTLPAVAVLLERA.

Substrate is bound by residues 21 to 23 (DLN), arginine 36, 59 to 62 (HLGR), arginine 113, and arginine 146. Residues lysine 197, glutamate 324, and 350–353 (GGDT) contribute to the ATP site.

Belongs to the phosphoglycerate kinase family. As to quaternary structure, monomer.

Its subcellular location is the cytoplasm. The catalysed reaction is (2R)-3-phosphoglycerate + ATP = (2R)-3-phospho-glyceroyl phosphate + ADP. It participates in carbohydrate degradation; glycolysis; pyruvate from D-glyceraldehyde 3-phosphate: step 2/5. The sequence is that of Phosphoglycerate kinase from Acinetobacter baumannii (strain ACICU).